We begin with the raw amino-acid sequence, 219 residues long: Envelope protein US9 homolog (219 aa).

At 1–193 the chain is on the intravirion side; the sequence is MEKAEAAAVV…RHRRRRVALT (193 aa). Residues 145-146 carry the Di-leucine internalization motif motif; that stretch reads LL. The tract at residues 153-168 is acidic; that stretch reads DYDSESGCYYSESDNE. 2 positions are modified to phosphoserine; by host CK2: Ser-163 and Ser-165. A helical; Signal-anchor for type II membrane protein membrane pass occupies residues 194-214; sequence VAGVILVVVLCAISGIVGAFL. Over 215–219 the chain is Virion surface; the sequence is ARVFP.

This sequence belongs to the alphaherpesvirinae envelope protein US9 family. Post-translationally, phosphorylated on serines within the acidic cluster. Phosphorylation determines whether endocytosed viral US9 traffics to the trans-Golgi network or recycles to the cell membrane.

The protein localises to the virion membrane. It localises to the host Golgi apparatus membrane. Its subcellular location is the host smooth endoplasmic reticulum membrane. The protein resides in the host cell membrane. Essential for the anterograde spread of the infection throughout the host nervous system. Together with the gE/gI heterodimer, US9 is involved in the sorting and transport of viral structural components toward axon tips. The chain is Envelope protein US9 homolog from Equine herpesvirus 1 (strain Ab4p) (EHV-1).